The primary structure comprises 312 residues: Putative pyridoxal kinase BUD16 (312 aa).

Residues serine 9, threonine 44, and tyrosine 122 each contribute to the substrate site. ATP-binding positions include 183–184 (TS) and 211–223 (RVPF…TGVG). Position 224 (aspartate 224) interacts with substrate.

It belongs to the pyridoxine kinase family. A divalent metal cation serves as cofactor.

It is found in the cytoplasm. The protein localises to the nucleus. It carries out the reaction pyridoxal + ATP = pyridoxal 5'-phosphate + ADP + H(+). Required for synthesis of pyridoxal-5-phosphate from vitamin B6. Important for bud site selection. This Saccharomyces cerevisiae (strain ATCC 204508 / S288c) (Baker's yeast) protein is Putative pyridoxal kinase BUD16 (BUD16).